The primary structure comprises 4306 residues: Cytoplasmic dynein 2 heavy chain 1 (4306 aa).

Residues 1–1650 (MAGSLSDVRK…YVQMVDSELQ (1650 aa)) form a stem region. 145 to 152 (LGVVLRKS) contacts ATP. Residues 669 to 696 (KELEGYIQKLQNAAERLATENRRLRKWH) are a coiled coil. 4 AAA regions span residues 1651 to 1875 (YTYE…VLRG), 1941 to 2161 (SALK…KQND), 2249 to 2505 (LTAD…WVLG), and 2617 to 2862 (HYGR…ESCK). ATP contacts are provided by residues 1689–1696 (GPAGTGKT), 1979–1986 (GPSGAGKS), 2291–2298 (GPEGCGKG), and 2655–2662 (GRSGVGRR). Residues 2880 to 3168 (AISSSKRKEL…AEVSKAQETI (289 aa)) form a stalk region. Coiled-coil stretches lie at residues 2896 to 2981 (LQAG…KEVQ), 3108 to 3199 (LETE…LATL), and 3407 to 3441 (IQHE…SLLE). AAA regions lie at residues 3243 to 3472 (LCTE…LIQD) and 3689 to 3904 (MALF…VIDR).

The protein belongs to the dynein heavy chain family. In terms of assembly, the cytoplasmic dynein complex 2 is probably composed by a heavy chain DYNC2H1 homodimer and a number of DYNC2LI1 light intermediate chains. In terms of tissue distribution, widely expressed both in ciliated and unciliated tissues. Detected in brain and testis (at protein level).

Its subcellular location is the cytoplasm. The protein localises to the cytoskeleton. The protein resides in the cilium axoneme. It is found in the cell membrane. Its function is as follows. May function as a motor for intraflagellar retrograde transport. Functions in cilia biogenesis. May play a role in transport between endoplasmic reticulum and Golgi or organization of the Golgi in cells. This chain is Cytoplasmic dynein 2 heavy chain 1 (Dync2h1), found in Rattus norvegicus (Rat).